The primary structure comprises 365 residues: UDP-N-acetylglucosamine--N-acetylmuramyl-(pentapeptide) pyrophosphoryl-undecaprenol N-acetylglucosamine transferase (365 aa).

UDP-N-acetyl-alpha-D-glucosamine-binding positions include 19–21 (TGG), N131, R170, S201, I255, 274–279 (ALTVTE), and Q300.

Belongs to the glycosyltransferase 28 family. MurG subfamily.

It is found in the cell inner membrane. The catalysed reaction is di-trans,octa-cis-undecaprenyl diphospho-N-acetyl-alpha-D-muramoyl-L-alanyl-D-glutamyl-meso-2,6-diaminopimeloyl-D-alanyl-D-alanine + UDP-N-acetyl-alpha-D-glucosamine = di-trans,octa-cis-undecaprenyl diphospho-[N-acetyl-alpha-D-glucosaminyl-(1-&gt;4)]-N-acetyl-alpha-D-muramoyl-L-alanyl-D-glutamyl-meso-2,6-diaminopimeloyl-D-alanyl-D-alanine + UDP + H(+). Its pathway is cell wall biogenesis; peptidoglycan biosynthesis. In terms of biological role, cell wall formation. Catalyzes the transfer of a GlcNAc subunit on undecaprenyl-pyrophosphoryl-MurNAc-pentapeptide (lipid intermediate I) to form undecaprenyl-pyrophosphoryl-MurNAc-(pentapeptide)GlcNAc (lipid intermediate II). The polypeptide is UDP-N-acetylglucosamine--N-acetylmuramyl-(pentapeptide) pyrophosphoryl-undecaprenol N-acetylglucosamine transferase (Acinetobacter baumannii (strain AB307-0294)).